A 208-amino-acid chain; its full sequence is Imidazole glycerol phosphate synthase subunit HisH (208 aa).

Residues 1 to 206 enclose the Glutamine amidotransferase type-1 domain; sequence MIVIIDYDTG…KEVIRSCKSS (206 aa). The active-site Nucleophile is Cys-79. Residues His-181 and Glu-183 contribute to the active site.

Heterodimer of HisH and HisF.

The protein resides in the cytoplasm. The enzyme catalyses 5-[(5-phospho-1-deoxy-D-ribulos-1-ylimino)methylamino]-1-(5-phospho-beta-D-ribosyl)imidazole-4-carboxamide + L-glutamine = D-erythro-1-(imidazol-4-yl)glycerol 3-phosphate + 5-amino-1-(5-phospho-beta-D-ribosyl)imidazole-4-carboxamide + L-glutamate + H(+). The catalysed reaction is L-glutamine + H2O = L-glutamate + NH4(+). The protein operates within amino-acid biosynthesis; L-histidine biosynthesis; L-histidine from 5-phospho-alpha-D-ribose 1-diphosphate: step 5/9. Functionally, IGPS catalyzes the conversion of PRFAR and glutamine to IGP, AICAR and glutamate. The HisH subunit catalyzes the hydrolysis of glutamine to glutamate and ammonia as part of the synthesis of IGP and AICAR. The resulting ammonia molecule is channeled to the active site of HisF. The chain is Imidazole glycerol phosphate synthase subunit HisH from Listeria monocytogenes serotype 4b (strain CLIP80459).